The following is a 178-amino-acid chain: Relaxin-like protein SQ10 (178 aa).

Positions Met1–Gly20 are cleaved as a signal peptide. Intrachain disulfides connect Cys34–Cys165, Cys46–Cys178, and Cys164–Cys169. A propeptide spans Glu54–Ser150 (connecting peptide).

This sequence belongs to the insulin family. As to quaternary structure, heterodimer of a B chain and an A chain linked by two disulfide bonds.

It localises to the secreted. The sequence is that of Relaxin-like protein SQ10 from Oryctolagus cuniculus (Rabbit).